We begin with the raw amino-acid sequence, 217 residues long: UPF0502 protein swp_3027 (217 aa).

This sequence belongs to the UPF0502 family.

This chain is UPF0502 protein swp_3027, found in Shewanella piezotolerans (strain WP3 / JCM 13877).